Here is a 280-residue protein sequence, read N- to C-terminus: Large ribosomal subunit protein uL2 (280 aa).

Disordered stretches follow at residues 29 to 58 (PEKS…GGGH) and 225 to 280 (VMNP…NKKR). Over residues 45 to 58 (SHGHITTRHRGGGH) the composition is skewed to basic residues. A compositionally biased stretch (basic and acidic residues) spans 253 to 269 (KEGRTRKPKRYSDDMIV). The span at 270–280 (RRRRANKNKKR) shows a compositional bias: basic residues.

Belongs to the universal ribosomal protein uL2 family. In terms of assembly, part of the 50S ribosomal subunit. Forms a bridge to the 30S subunit in the 70S ribosome.

One of the primary rRNA binding proteins. Required for association of the 30S and 50S subunits to form the 70S ribosome, for tRNA binding and peptide bond formation. It has been suggested to have peptidyltransferase activity; this is somewhat controversial. Makes several contacts with the 16S rRNA in the 70S ribosome. This chain is Large ribosomal subunit protein uL2, found in Corynebacterium glutamicum (strain R).